Consider the following 180-residue polypeptide: Ribosome maturation factor RimM (180 aa).

The PRC barrel domain occupies 104–177; the sequence is EGEFHLLDLV…WLLLTPPPGL (74 aa).

Belongs to the RimM family. Binds ribosomal protein uS19.

Its subcellular location is the cytoplasm. An accessory protein needed during the final step in the assembly of 30S ribosomal subunit, possibly for assembly of the head region. Essential for efficient processing of 16S rRNA. May be needed both before and after RbfA during the maturation of 16S rRNA. It has affinity for free ribosomal 30S subunits but not for 70S ribosomes. The polypeptide is Ribosome maturation factor RimM (Synechococcus sp. (strain CC9902)).